Consider the following 72-residue polypeptide: Translation initiation factor IF-1 (72 aa).

Positions 1-72 (MAKEDSIEMQ…TKGRIVFRAR (72 aa)) constitute an S1-like domain.

This sequence belongs to the IF-1 family. As to quaternary structure, component of the 30S ribosomal translation pre-initiation complex which assembles on the 30S ribosome in the order IF-2 and IF-3, IF-1 and N-formylmethionyl-tRNA(fMet); mRNA recruitment can occur at any time during PIC assembly.

It is found in the cytoplasm. Its function is as follows. One of the essential components for the initiation of protein synthesis. Stabilizes the binding of IF-2 and IF-3 on the 30S subunit to which N-formylmethionyl-tRNA(fMet) subsequently binds. Helps modulate mRNA selection, yielding the 30S pre-initiation complex (PIC). Upon addition of the 50S ribosomal subunit IF-1, IF-2 and IF-3 are released leaving the mature 70S translation initiation complex. This chain is Translation initiation factor IF-1, found in Shewanella amazonensis (strain ATCC BAA-1098 / SB2B).